We begin with the raw amino-acid sequence, 243 residues long: Pyridoxine 5'-phosphate synthase (243 aa).

Asparagine 9 contacts 3-amino-2-oxopropyl phosphate. 11 to 12 contributes to the 1-deoxy-D-xylulose 5-phosphate binding site; the sequence is DH. Arginine 20 provides a ligand contact to 3-amino-2-oxopropyl phosphate. Residue histidine 45 is the Proton acceptor of the active site. The 1-deoxy-D-xylulose 5-phosphate site is built by arginine 47 and histidine 52. Glutamate 72 acts as the Proton acceptor in catalysis. Residue threonine 102 coordinates 1-deoxy-D-xylulose 5-phosphate. Histidine 193 acts as the Proton donor in catalysis. 3-amino-2-oxopropyl phosphate is bound by residues glycine 194 and 215–216; that span reads GH.

Belongs to the PNP synthase family. As to quaternary structure, homooctamer; tetramer of dimers.

The protein localises to the cytoplasm. The enzyme catalyses 3-amino-2-oxopropyl phosphate + 1-deoxy-D-xylulose 5-phosphate = pyridoxine 5'-phosphate + phosphate + 2 H2O + H(+). Its pathway is cofactor biosynthesis; pyridoxine 5'-phosphate biosynthesis; pyridoxine 5'-phosphate from D-erythrose 4-phosphate: step 5/5. Functionally, catalyzes the complicated ring closure reaction between the two acyclic compounds 1-deoxy-D-xylulose-5-phosphate (DXP) and 3-amino-2-oxopropyl phosphate (1-amino-acetone-3-phosphate or AAP) to form pyridoxine 5'-phosphate (PNP) and inorganic phosphate. This is Pyridoxine 5'-phosphate synthase from Salmonella typhimurium (strain LT2 / SGSC1412 / ATCC 700720).